The primary structure comprises 319 residues: Formimidoylglutamase (319 aa).

Residues histidine 131, aspartate 154, histidine 156, aspartate 158, cysteine 248, and aspartate 250 each contribute to the Mn(2+) site.

The protein belongs to the arginase family. It depends on Mn(2+) as a cofactor.

The enzyme catalyses N-formimidoyl-L-glutamate + H2O = formamide + L-glutamate. It functions in the pathway amino-acid degradation; L-histidine degradation into L-glutamate; L-glutamate from N-formimidoyl-L-glutamate (hydrolase route): step 1/1. Its function is as follows. Catalyzes the conversion of N-formimidoyl-L-glutamate to L-glutamate and formamide. This Legionella pneumophila subsp. pneumophila (strain Philadelphia 1 / ATCC 33152 / DSM 7513) protein is Formimidoylglutamase.